An 852-amino-acid chain; its full sequence is Elongation factor 2 (852 aa).

One can recognise a tr-type G domain in the interval 17 to 356 (RNIRNMSVIA…MIAFHLPSPV (340 aa)). 26 to 33 (AHVDHGKS) contributes to the GTP binding site. A phosphothreonine mark is found at Thr-57 and Thr-59. GTP contacts are provided by residues 170-173 (NKMD) and 227-229 (SGL). Position 709 is a diphthamide (His-709).

The protein belongs to the TRAFAC class translation factor GTPase superfamily. Classic translation factor GTPase family. EF-G/EF-2 subfamily. Phosphorylation by EF-2 kinase completely inactivates EF-2. Post-translationally, AMPylated by fic-1.

It is found in the cytoplasm. The enzyme catalyses GTP + H2O = GDP + phosphate + H(+). Its function is as follows. Catalyzes the GTP-dependent ribosomal translocation step during translation elongation. During this step, the ribosome changes from the pre-translocational (PRE) to the post-translocational (POST) state as the newly formed A-site-bound peptidyl-tRNA and P-site-bound deacylated tRNA move to the P and E sites, respectively. Catalyzes the coordinated movement of the two tRNA molecules, the mRNA and conformational changes in the ribosome. Involved in the morphogenesis of epidermal tissues. The protein is Elongation factor 2 (eef-2) of Caenorhabditis elegans.